A 291-amino-acid polypeptide reads, in one-letter code: Phosphatidylglycerol--prolipoprotein diacylglyceryl transferase (291 aa).

A run of 4 helical transmembrane segments spans residues 24–44 (WYALAYIGGIMLGWLYARALL), 64–84 (FILWVTIAIIVGGRVGYVLFY), 100–120 (WNGGMSFHGGFMGCVAAVILF), and 125–145 (GLPILSLGDVATAVGPIGLFL). R147 contributes to the a 1,2-diacyl-sn-glycero-3-phospho-(1'-sn-glycerol) binding site. Helical transmembrane passes span 187-207 (AALEGILLFTILALMIRLGAL), 211-231 (GLVLGSFIALYAMARIVAEFF), and 247-267 (MGMLLSIPMVIIGLAIVYAAW).

Belongs to the Lgt family.

The protein localises to the cell inner membrane. It carries out the reaction L-cysteinyl-[prolipoprotein] + a 1,2-diacyl-sn-glycero-3-phospho-(1'-sn-glycerol) = an S-1,2-diacyl-sn-glyceryl-L-cysteinyl-[prolipoprotein] + sn-glycerol 1-phosphate + H(+). The protein operates within protein modification; lipoprotein biosynthesis (diacylglyceryl transfer). Functionally, catalyzes the transfer of the diacylglyceryl group from phosphatidylglycerol to the sulfhydryl group of the N-terminal cysteine of a prolipoprotein, the first step in the formation of mature lipoproteins. In Nitrobacter winogradskyi (strain ATCC 25391 / DSM 10237 / CIP 104748 / NCIMB 11846 / Nb-255), this protein is Phosphatidylglycerol--prolipoprotein diacylglyceryl transferase.